The primary structure comprises 499 residues: MRILILNPPHPAIGSRIPKEQLPPLGLLSIGGPLLDAGHDVTLLDAEFGPLTDSEIVERVCAHCPQLLLIGHSGSTSAHPIVCRLTLFLRERLPNLIIVYGGVFPTYHFHDILTKEPQIDFIVRGEGEATVAKLIAALENHNDLNKVDGIAFRRDEQIIETLPAPMIQDLDVYRVGWELVDLKKYSYYGGKQAVVIQFSRGCPHLCNYCGQRGFWARWRHRDPKKFAQEIVWLHRTHGVQLFNLADENPTVNKAIWQEFCEAIIAENISITIIGSTRADDIVRDADILHLYRRAGVERFLLGMENTNEATLKHIRKGSKTSTDREAIRLLRQHNILSLATWVTDFEEVRDRDFIQALKQLLYYDPDQIMSLYVTPHRWTSFYGIASERRVIQLDQTKWDYKHQVLAATHMPPWRIFLWVKLIEILLQTRPKALWRLLFQPNKASRRGMYWFTLMGRRVLVHELINFFFGDRRVKNGPTLQEFWGMPQEHQEIPLSITRK.

In terms of domain architecture, B12-binding spans 9–145 (PHPAIGSRIP…AALENHNDLN (137 aa)). The Radical SAM core domain occupies 188–420 (YGGKQAVVIQ…PPWRIFLWVK (233 aa)). The [4Fe-4S] cluster site is built by cysteine 202, cysteine 206, and cysteine 209.

It belongs to the BchE family. [4Fe-4S] cluster serves as cofactor. Adenosylcob(III)alamin is required as a cofactor.

It catalyses the reaction Mg-protoporphyrin IX 13-monomethyl ester + 3 S-adenosyl-L-methionine + H2O = 3,8-divinyl protochlorophyllide a + 3 5'-deoxyadenosine + 3 L-methionine + 4 H(+). The protein operates within porphyrin-containing compound metabolism; bacteriochlorophyll biosynthesis (light-independent). Its function is as follows. Involved in the tetrapyrrole biosynthetic pathways leading to chlorophyll and bacteriochlorophyll (BChl). Catalyzes the anaerobic formation of the isocyclic ring (E-ring) in Mg-protoporphyrin monomethyl ester (MPE) to yield protochlorophyllide a (PChlide a) via a six-electron oxidation and the formation of an oxo group at position C13 using oxygen from a water molecule. The sequence is that of Anaerobic magnesium-protoporphyrin IX monomethyl ester cyclase from Synechocystis sp. (strain ATCC 27184 / PCC 6803 / Kazusa).